Reading from the N-terminus, the 183-residue chain is U3 small nucleolar ribonucleoprotein protein imp3 (183 aa).

In terms of domain architecture, S4 RNA-binding spans 108-174; that stretch reads RRLPVVMRNI…IKKHVMDYNN (67 aa).

The protein belongs to the universal ribosomal protein uS4 family. Component of a heterotrimeric complex containing imp3, imp4 and mpp10.

It is found in the nucleus. The protein resides in the nucleolus. In terms of biological role, component of the U3 small nucleolar ribonucleoprotein. Required for the early cleavages at sites A0, A1 and A2 during 18S ribosomal pre-RNA processing. The protein is U3 small nucleolar ribonucleoprotein protein imp3 of Caenorhabditis elegans.